A 266-amino-acid chain; its full sequence is Undecaprenyl-diphosphatase (266 aa).

8 helical membrane passes run Met-1–Ile-21, Phe-43–Ile-63, Ser-83–Phe-103, Val-114–Phe-134, Thr-144–Gly-164, Ile-186–Ile-206, Leu-219–Ile-239, and Val-245–Ile-265.

This sequence belongs to the UppP family.

Its subcellular location is the cell inner membrane. It catalyses the reaction di-trans,octa-cis-undecaprenyl diphosphate + H2O = di-trans,octa-cis-undecaprenyl phosphate + phosphate + H(+). Functionally, catalyzes the dephosphorylation of undecaprenyl diphosphate (UPP). Confers resistance to bacitracin. In Ruthia magnifica subsp. Calyptogena magnifica, this protein is Undecaprenyl-diphosphatase.